The following is a 460-amino-acid chain: MAVTMEEIVAHAKHRGFVFPGSEIYGGLANTWDYGPLGVELKNNIKRAWWKKFVQESPYNVGLDAAILMNPRTWEASGHLGNFNDPMVDCKQCKARHRADKLIEKALEEKGIEMIVDGLPLAKMDELIKEYDIACPECGSRDFTNVRQFNLMFKTYQGVTESSANEIYLRPETAQGIFVNFKNVQRTMRKKLPFGIAQIGKSFRNEITPGNFTFRTREFEQMELEFFCKPGEELQWFDYWKQFCKDWLLSLGMKEDNIRLRDHAKEELSHYSNATTDIEYHFPFGWGELWGIASRTDYDLKRHMEYSGEDFHYLDQETNERYIPYCIEPSLGADRVTLAFMIDAYDEEELEDGTTRTVMHLHPALAPYKAAVLPLSKKLADGAHRIYEELVKHFMVDYDETGSIGKRYRRQDEIGTPFCITYDFESEQDGQVTVRDRDTMEQVRLPIGELKAFLEEKIAF.

The substrate site is built by R98 and E172. ATP-binding positions include 204–206 (RNE), 214–219 (FRTREF), 288–289 (EL), and 332–335 (GADR). 219–223 (FEQME) lines the substrate pocket. 328–332 (EPSLG) contributes to the substrate binding site.

Belongs to the class-II aminoacyl-tRNA synthetase family. In terms of assembly, homodimer.

The protein localises to the cytoplasm. The enzyme catalyses tRNA(Gly) + glycine + ATP = glycyl-tRNA(Gly) + AMP + diphosphate. Its function is as follows. Catalyzes the attachment of glycine to tRNA(Gly). The chain is Glycine--tRNA ligase from Geobacillus kaustophilus (strain HTA426).